The chain runs to 225 residues: NAD(P)H-quinone oxidoreductase subunit K, chloroplastic (225 aa).

Cysteine 43, cysteine 44, cysteine 108, and cysteine 139 together coordinate [4Fe-4S] cluster.

This sequence belongs to the complex I 20 kDa subunit family. As to quaternary structure, NDH is composed of at least 16 different subunits, 5 of which are encoded in the nucleus. [4Fe-4S] cluster is required as a cofactor.

It localises to the plastid. Its subcellular location is the chloroplast thylakoid membrane. The enzyme catalyses a plastoquinone + NADH + (n+1) H(+)(in) = a plastoquinol + NAD(+) + n H(+)(out). The catalysed reaction is a plastoquinone + NADPH + (n+1) H(+)(in) = a plastoquinol + NADP(+) + n H(+)(out). NDH shuttles electrons from NAD(P)H:plastoquinone, via FMN and iron-sulfur (Fe-S) centers, to quinones in the photosynthetic chain and possibly in a chloroplast respiratory chain. The immediate electron acceptor for the enzyme in this species is believed to be plastoquinone. Couples the redox reaction to proton translocation, and thus conserves the redox energy in a proton gradient. In Draba nemorosa (Woodland whitlowgrass), this protein is NAD(P)H-quinone oxidoreductase subunit K, chloroplastic.